The primary structure comprises 90 residues: Small ribosomal subunit protein bS18A (90 aa).

This sequence belongs to the bacterial ribosomal protein bS18 family. Part of the 30S ribosomal subunit. Forms a tight heterodimer with protein bS6.

In terms of biological role, binds as a heterodimer with protein bS6 to the central domain of the 16S rRNA, where it helps stabilize the platform of the 30S subunit. In Roseiflexus castenholzii (strain DSM 13941 / HLO8), this protein is Small ribosomal subunit protein bS18A.